Consider the following 216-residue polypeptide: Adenylate kinase (216 aa).

G10 to T15 serves as a coordination point for ATP. An NMP region spans residues S30–V59. AMP-binding positions include T31, R36, Q57 to V59, G85 to R88, and Q92. Residues G126–D163 form an LID region. R127 is an ATP binding site. Positions 130 and 133 each coordinate Zn(2+). Residue S136 to Y137 participates in ATP binding. Residues C150 and C153 each coordinate Zn(2+). Positions 160 and 171 each coordinate AMP. E199 is an ATP binding site.

The protein belongs to the adenylate kinase family. Monomer.

The protein resides in the cytoplasm. The enzyme catalyses AMP + ATP = 2 ADP. Its pathway is purine metabolism; AMP biosynthesis via salvage pathway; AMP from ADP: step 1/1. Functionally, catalyzes the reversible transfer of the terminal phosphate group between ATP and AMP. Plays an important role in cellular energy homeostasis and in adenine nucleotide metabolism. In Clostridium botulinum (strain ATCC 19397 / Type A), this protein is Adenylate kinase.